Here is a 99-residue protein sequence, read N- to C-terminus: A-type ATP synthase subunit F (99 aa).

It belongs to the V-ATPase F subunit family. As to quaternary structure, has multiple subunits with at least A(3), B(3), C, D, E, F, H, I and proteolipid K(x).

The protein localises to the cell membrane. In terms of biological role, component of the A-type ATP synthase that produces ATP from ADP in the presence of a proton gradient across the membrane. In Methanococcus maripaludis (strain C5 / ATCC BAA-1333), this protein is A-type ATP synthase subunit F.